A 296-amino-acid polypeptide reads, in one-letter code: Phosphatidylserine decarboxylase proenzyme (296 aa).

Residues Asp-113, His-169, and Ser-256 each act as charge relay system; for autoendoproteolytic cleavage activity in the active site. The active-site Schiff-base intermediate with substrate; via pyruvic acid; for decarboxylase activity is Ser-256. Ser-256 carries the pyruvic acid (Ser); by autocatalysis modification.

The protein belongs to the phosphatidylserine decarboxylase family. PSD-B subfamily. Prokaryotic type II sub-subfamily. As to quaternary structure, heterodimer of a large membrane-associated beta subunit and a small pyruvoyl-containing alpha subunit. Requires pyruvate as cofactor. In terms of processing, is synthesized initially as an inactive proenzyme. Formation of the active enzyme involves a self-maturation process in which the active site pyruvoyl group is generated from an internal serine residue via an autocatalytic post-translational modification. Two non-identical subunits are generated from the proenzyme in this reaction, and the pyruvate is formed at the N-terminus of the alpha chain, which is derived from the carboxyl end of the proenzyme. The autoendoproteolytic cleavage occurs by a canonical serine protease mechanism, in which the side chain hydroxyl group of the serine supplies its oxygen atom to form the C-terminus of the beta chain, while the remainder of the serine residue undergoes an oxidative deamination to produce ammonia and the pyruvoyl prosthetic group on the alpha chain. During this reaction, the Ser that is part of the protease active site of the proenzyme becomes the pyruvoyl prosthetic group, which constitutes an essential element of the active site of the mature decarboxylase.

It is found in the cell membrane. It carries out the reaction a 1,2-diacyl-sn-glycero-3-phospho-L-serine + H(+) = a 1,2-diacyl-sn-glycero-3-phosphoethanolamine + CO2. The protein operates within phospholipid metabolism; phosphatidylethanolamine biosynthesis; phosphatidylethanolamine from CDP-diacylglycerol: step 2/2. Catalyzes the formation of phosphatidylethanolamine (PtdEtn) from phosphatidylserine (PtdSer). In Clostridium botulinum (strain Alaska E43 / Type E3), this protein is Phosphatidylserine decarboxylase proenzyme.